The chain runs to 68 residues: Large ribosomal subunit protein bL35 (68 aa).

Belongs to the bacterial ribosomal protein bL35 family.

The sequence is that of Large ribosomal subunit protein bL35 from Orientia tsutsugamushi (strain Boryong) (Rickettsia tsutsugamushi).